The sequence spans 32 residues: Jingzhaotoxin F4-32.60 (32 aa).

3 disulfides stabilise this stretch: cysteine 2–cysteine 17, cysteine 9–cysteine 22, and cysteine 16–cysteine 29. Aspartate 31 bears the Aspartic acid 1-amide mark.

It belongs to the neurotoxin 10 (Hwtx-1) family. 30 (Jztx-14) subfamily. Amidated as well as non-amidated forms are found in the venom. As to expression, expressed by the venom gland.

The protein resides in the secreted. Functionally, probable ion channel inhibitor. The sequence is that of Jingzhaotoxin F4-32.60 from Chilobrachys guangxiensis (Chinese earth tiger tarantula).